The following is an 836-amino-acid chain: Granulocyte colony-stimulating factor receptor (836 aa).

Positions 1 to 24 (MARLGNCSLTWAALIILLLPGSLE) are cleaved as a signal peptide. In terms of domain architecture, Ig-like C2-type spans 25-117 (ECGHISVSAP…SLQILDQVEL (93 aa)). At 25–627 (ECGHISVSAP…TLTPEGSELH (603 aa)) the chain is on the extracellular side. 2 disulfides stabilise this stretch: C26–C52 and C46–C101. N-linked (GlcNAc...) asparagine glycosylation is found at N51, N93, N128, and N134. Fibronectin type-III domains follow at residues 125-230 (IPHN…LEPP), 233-332 (RTMD…TTER), 334-430 (PTVR…SRGP), 431-528 (ALTR…MAPS), and 530-623 (APEL…TPEG). 5 cysteine pairs are disulfide-bonded: C131–C142, C167–C218, C177–C186, C248–C295, and C266–C309. The short motif at 318–322 (WSDWS) is the WSXWS motif element. Residues N389, N474, N579, and N610 are each glycosylated (N-linked (GlcNAc...) asparagine). A helical transmembrane segment spans residues 628-650 (IILGLFGLLLLLTCLCGTAWLCC). The Cytoplasmic segment spans residues 651–836 (SPNRKNPLWP…VHGMEALGSF (186 aa)). Residues 658-666 (LWPSVPDPA) carry the Box 1 motif motif.

The protein belongs to the type I cytokine receptor family. Type 2 subfamily. As to quaternary structure, homodimer. The dimeric receptor binds two CSF3 molecules. Interacts with CEACAM1; down-regulates the CSF3R-STAT3 pathway through recruitment of PTPN6 that dephosphorylates CSF3R. N-glycosylated. In terms of tissue distribution, one or several isoforms have been found in myelogenous leukemia cell line KG-1, leukemia U-937 cell line, in bone marrow cells, placenta, and peripheral blood granulocytes. Isoform GCSFR-2 is found only in leukemia U-937 cells. Isoform GCSFR-3 is highly expressed in placenta.

It is found in the secreted. The protein localises to the cell membrane. Receptor for granulocyte colony-stimulating factor (CSF3), essential for granulocytic maturation. Plays a crucial role in the proliferation, differentiation and survival of cells along the neutrophilic lineage. In addition it may function in some adhesion or recognition events at the cell surface. The protein is Granulocyte colony-stimulating factor receptor (CSF3R) of Homo sapiens (Human).